Here is a 206-residue protein sequence, read N- to C-terminus: Photosynthetic reaction center cytochrome c-551 (206 aa).

The next 3 membrane-spanning stretches (helical) occupy residues 10–30, 49–69, and 76–96; these read IALA…VSFL, FMGW…LGKM, and KWFL…FFSL. Residues Cys152, Cys155, His156, and Met182 each coordinate heme.

In terms of assembly, component of the photosynthetic reaction center. The reaction center interacts with the Fenna-Matthews-Olson (FMO, fmoA) complex. In terms of processing, binds 1 heme group per subunit.

It is found in the cell inner membrane. Functionally, monoheme cytochrome which is the immediate electron donor to P840 of the photosynthetic reaction center complex. The chain is Photosynthetic reaction center cytochrome c-551 (pscC) from Chlorobaculum parvum (strain DSM 263 / NCIMB 8327) (Chlorobium vibrioforme subsp. thiosulfatophilum).